The chain runs to 930 residues: Zn(2)-C6 fungal-type transcription factor FTF1c (930 aa).

The zn(2)-C6 fungal-type DNA-binding region spans 137 to 164; that stretch reads CIACRRKKIRCSGEKPACEHCLCSYIPC.

Its subcellular location is the nucleus. Zn(2)-C6 fungal-type transcription factor that has a role in the establishment of the fungus within the plant and/or the progress of the disease. Regulates the expression of virulence factors such as SIX1 and SIX6. The chain is Zn(2)-C6 fungal-type transcription factor FTF1c from Fusarium oxysporum f. sp. lycopersici (strain 4287 / CBS 123668 / FGSC 9935 / NRRL 34936) (Fusarium vascular wilt of tomato).